The following is a 1021-amino-acid chain: Phytosulfokine receptor 1 (1021 aa).

The signal sequence occupies residues methionine 1 to serine 24. One copy of the LRR 1 repeat lies at valine 21–glycine 43. Asparagine 26, asparagine 54, and asparagine 83 each carry an N-linked (GlcNAc...) asparagine glycan. LRR repeat units follow at residues serine 85–leucine 109, aspartate 110–leucine 133, asparagine 135–leucine 156, serine 158–asparagine 180, leucine 181–cysteine 205, serine 206–leucine 229, asparagine 231–lysine 252, leucine 253–leucine 277, serine 301–methionine 325, threonine 326–cysteine 349, arginine 351–asparagine 372, phenylalanine 373–glutamine 397, leucine 402–asparagine 426, lysine 428–serine 448, proline 449–serine 474, and phenylalanine 476–leucine 496. Residues asparagine 116 and asparagine 132 are each glycosylated (N-linked (GlcNAc...) asparagine). Asparagine 204, asparagine 217, and asparagine 231 each carry an N-linked (GlcNAc...) asparagine glycan. N-linked (GlcNAc...) asparagine glycans are attached at residues asparagine 311, asparagine 321, and asparagine 327. Asparagine 383 and asparagine 388 each carry an N-linked (GlcNAc...) asparagine glycan. N-linked (GlcNAc...) asparagine glycans are attached at residues asparagine 482, asparagine 546, asparagine 568, asparagine 576, and asparagine 592. An LRR 18; atypical repeat occupies serine 498–aspartate 555. LRR repeat units lie at residues leucine 556–methionine 580, threonine 581–leucine 604, and phenylalanine 606–threonine 629. Asparagine 632 carries an N-linked (GlcNAc...) asparagine glycan. Residues valine 673–leucine 693 form a helical membrane-spanning segment. One can recognise a Protein kinase domain in the interval phenylalanine 743–leucine 1014. Residues isoleucine 749–valine 757 and lysine 771 each bind ATP. The active-site Proton acceptor is aspartate 869.

The protein belongs to the protein kinase superfamily. Ser/Thr protein kinase family. Post-translationally, N-glycosylated. As to expression, expressed ubiquitously in leaf, apical meristem, hypocotyl and root.

It localises to the cell membrane. The catalysed reaction is L-seryl-[protein] + ATP = O-phospho-L-seryl-[protein] + ADP + H(+). The enzyme catalyses L-threonyl-[protein] + ATP = O-phospho-L-threonyl-[protein] + ADP + H(+). Functionally, phytosulfokine receptor with a serine/threonine-protein kinase activity. Regulates, in response to phytosulfokine binding, a signaling cascade involved in plant cell differentiation, organogenesis and somatic embryogenesis. The polypeptide is Phytosulfokine receptor 1 (PSKR) (Daucus carota (Wild carrot)).